The following is a 1214-amino-acid chain: Brassinosteroid LRR receptor kinase BRL3 (1214 aa).

Positions 1–29 are cleaved as a signal peptide; that stretch reads MAAVRVVAPAPSVLLLVAAAVVLLHLARA. The N-linked (GlcNAc...) asparagine glycan is linked to N61. The Cys pair 1 signature appears at 69 to 76; sequence CAWAGVSC. LRR repeat units lie at residues 103 to 127, 131 to 155, 156 to 177, 178 to 202, 204 to 228, 230 to 250, 252 to 276, 277 to 302, 303 to 325, 327 to 351, 353 to 375, 377 to 400, 401 to 427, 429 to 451, 452 to 476, 478 to 500, 502 to 525, 526 to 549, 550 to 572, 573 to 597, 599 to 621, and 650 to 673; these read LSAL…GSPR, PCAL…FLAS, CGGL…YPFP, PSLR…SLTG, HGIQ…PCTE, SVLD…FVAM, PANL…EFGG, CANL…LVDC, RRLE…TFLV, LQAL…LSIL, KTLV…SFGQ, RFLQ…VITN, ISSL…ASRC, LLEV…LCSS, LPSL…LSNC, NLES…ILFL, KLVD…CFNS, TALE…ITRC, VNLI…GFGN, LQNL…LGSC, NLIW…LAAQ, and GVLF…HLCS. N145, N163, N197, and N210 each carry an N-linked (GlcNAc...) asparagine glycan. Residues N254, N264, and N279 are each glycosylated (N-linked (GlcNAc...) asparagine). N-linked (GlcNAc...) asparagine glycosylation is found at N400 and N413. Residue N466 is glycosylated (N-linked (GlcNAc...) asparagine). Residues N512 and N524 are each glycosylated (N-linked (GlcNAc...) asparagine). A glycan (N-linked (GlcNAc...) asparagine) is linked at N561. Residue Y678 coordinates brassinolide. LRR repeat units lie at residues 689–712, 713–736, 738–760, and 762–786; these read NGSM…SFGN, MTYL…AFTG, KGIG…GFGC, and HFLA…QLIT. The Cys pair 2 signature appears at 799-806; it reads CGIPLNPC. The chain crosses the membrane as a helical span at residues 829–849; it reads SVFLAVTLSVLILFSLLIIHY. One can recognise a Protein kinase domain in the interval 913 to 1196; sequence FCAETLIGSG…FQVDSGSNFL (284 aa). ATP contacts are provided by residues 919–927, K941, 987–989, 993–996, 1039–1044, and D1057; these read IGSGGFGEV, EYM, SLDF, and DMKSSN. D1039 (proton acceptor) is an active-site residue.

The protein belongs to the protein kinase superfamily. Ser/Thr protein kinase family. In terms of tissue distribution, highly expressed in roots. Expressed at low levels in shoots.

It localises to the cell membrane. It catalyses the reaction L-seryl-[protein] + ATP = O-phospho-L-seryl-[protein] + ADP + H(+). The enzyme catalyses L-threonyl-[protein] + ATP = O-phospho-L-threonyl-[protein] + ADP + H(+). Its function is as follows. May be involved in brassenosteroid (BR) perception in roots. This is Brassinosteroid LRR receptor kinase BRL3 from Oryza sativa subsp. japonica (Rice).